We begin with the raw amino-acid sequence, 306 residues long: Homeobox protein HMX3 (306 aa).

Residues 95–181 (HTPRTEVPDK…DKKPCRKKKT (87 aa)) form a disordered region. Composition is skewed to basic and acidic residues over residues 117–143 (GERD…KSPE) and 153–174 (EEGK…PDKK). The segment at residues 178–237 (KKKTRTVFSRSQVFQLESTFDMKRYLSSSERAGLAASLHLTETQVKIWFQNRRNKWKRQL) is a DNA-binding region (homeobox).

Belongs to the HMX homeobox family.

It is found in the nucleus. Transcription factor involved in specification of neuronal cell types and which is required for inner ear and hypothalamus development. Binds to the 5'-CAAGTG-3' core sequence. May act as a stage-specific inhibitor of anf1 in the anterior neural plate during the development. The chain is Homeobox protein HMX3 (hmx3) from Xenopus tropicalis (Western clawed frog).